The following is a 654-amino-acid chain: Endoplasmic reticulum chaperone BiP (654 aa).

The signal sequence occupies residues 1–18; sequence MKFTVVAAALLLLCAVRA. The interval 1 to 80 is required for interaction with ELAPOR1; sequence MKFTVVAAAL…EGERLIGDAA (80 aa). 36 to 39 serves as a coordination point for ATP; sequence GTTY. At Ser-86 the chain carries Phosphoserine. ATP is bound at residue Lys-96. Lys-125 is modified (N6-acetyllysine). Residues 125–280 are nucleotide-binding (NBD); sequence KPYIQVDIGG…KKKTGKDVRK (156 aa). Tyr-160 bears the 3'-nitrotyrosine mark. Lys-213 carries the N6-acetyllysine modification. ATP is bound at residue 227–229; the sequence is GGT. An N6-acetyllysine modification is found at Lys-271. ATP is bound at residue 293 to 300; that stretch reads EKAKRALS. Lys-326 is modified (N6-acetyllysine). Residue Lys-352 forms a Glycyl lysine isopeptide (Lys-Gly) (interchain with G-Cter in SUMO2) linkage. At Lys-353 the chain carries N6-acetyllysine; alternate. A Glycyl lysine isopeptide (Lys-Gly) (interchain with G-Cter in SUMO1); alternate cross-link involves residue Lys-353. An ATP-binding site is contributed by 364–367; sequence GSTR. The tract at residues 409 to 419 is interdomain linker; the sequence is QDTGDLVLLDV. The interval 420–500 is substrate-binding (SBD); that stretch reads CPLTLGIETV…PRGVPQIEVT (81 aa). Position 447 is an N6-succinyllysine (Lys-447). An Omega-N-methylarginine modification is found at Arg-492. Position 518 is an O-AMP-threonine; alternate (Thr-518). Residue Thr-518 is modified to Phosphothreonine; alternate. Lys-585 carries the N6,N6,N6-trimethyllysine; by METTL21A; in vitro modification. At Lys-585 the chain carries N6,N6-dimethyllysine; alternate. At Lys-585 the chain carries N6-methyllysine; alternate. N6-methyllysine is present on Lys-591. The disordered stretch occupies residues 631–654; it reads ISKLYGSGGPPPTGEEDTSEKDEL. Residues Thr-643 and Thr-648 each carry the phosphothreonine modification. Positions 644 to 654 are enriched in acidic residues; that stretch reads GEEDTSEKDEL. Ser-649 bears the Phosphoserine mark. The short motif at 651–654 is the Prevents secretion from ER element; it reads KDEL.

It belongs to the heat shock protein 70 family. Monomer and homooligomer; homooligomerization via the interdomain linker inactivates the chaperone activity and acts as a storage of HSPA5/BiP molecules. Interacts with DNAJC1 (via J domain). Component of an EIF2 complex at least composed of CELF1/CUGBP1, CALR, CALR3, EIF2S1, EIF2S2, HSP90B1 and HSPA5. Part of a large chaperone multiprotein complex comprising DNAJB11, HSP90B1, HSPA5, HYOU, PDIA2, PDIA4, PDIA6, PPIB, SDF2L1, UGGT1 and very small amounts of ERP29, but not, or at very low levels, CALR nor CANX. Interacts with TMEM132A and TRIM21. May form a complex with ERLEC1, OS9, SEL1L and SYVN1. Interacts with DNAJC10. Interacts with DNAJB9/ERdj4; leading to recruit HSPA5/BiP to ERN1/IRE1. Interacts with ERN1/IRE1 (via luminal domain); the interaction takes place following interaction with DNAJB9/ERdj4 and leads to inactivate ERN1/IRE1, the interaction also competitively inhibits ERN1 interaction with MANF. Interacts directly with MANF (via SAP domain); the interaction inhibits ATP binding to HSPA5/BiP and subsequent nucleotide exchange. Interacts with EIF2AK3/PERK (via luminal domain); interaction leads to inactivate EIF2AK3/PERK. Interacts with MX1. Interacts with METTL23. Interacts with CEMIP; the interaction induces calcium leakage from the endoplasmic reticulum and cell migration. Interacts with PCSK4 form; the interaction takes place in the endoplasmic reticulum. Interacts with CIPC. Interacts with CCDC88B (via C-terminus); the interaction opposes ERN1-mediated JNK activation, protecting against apoptosis. Interacts with INPP5K; necessary for INPP5K localization at the endoplasmic reticulum. Interacts with MANF; the interaction is direct. Interacts with LOXL2; leading to activate the ERN1/IRE1-XBP1 pathway of the unfolded protein response. Interacts with CLU under stressed condition; interaction increases CLU protein stability; facilitates its retrotranslocation and redistribution to the mitochondria; cooperatively suppress stress-induced apoptosis by stabilizing mitochondrial membrane integrity. Interacts with CCDC47. Interacts with CLN3. Interacts with ELAPOR1; may regulate the function of HSPA5 in apoptosis and cell proliferation. Interacts with CASP7. Interacts with ILDR2; the interaction stabilizes ILDR2 expression. Interacts with ADAM7. In unstressed cells, AMPylation at Thr-518 by FICD inactivates the chaperome activity: AMPylated form is locked in a relatively inert state and only weakly stimulated by J domain-containing proteins. In response to endoplasmic reticulum stress, de-AMPylation by the same protein, FICD, restores the chaperone activity.

Its subcellular location is the endoplasmic reticulum lumen. It is found in the melanosome. The protein localises to the cytoplasm. It localises to the cell surface. The catalysed reaction is ATP + H2O = ADP + phosphate + H(+). The chaperone activity is regulated by ATP-induced allosteric coupling of the nucleotide-binding (NBD) and substrate-binding (SBD) domains. In the ADP-bound and nucleotide-free (apo) states, the two domains have little interaction. In contrast, in the ATP-bound state the two domains are tightly coupled, which results in drastically accelerated kinetics in both binding and release of polypeptide substrates. J domain-containing co-chaperones (DNAJB9/ERdj4 or DNAJC10/ERdj5) stimulate the ATPase activity and are required for efficient substrate recognition by HSPA5/BiP. Homooligomerization inactivates participating HSPA5/BiP protomers and probably act as reservoirs to store HSPA5/BiP molecules when they are not needed by the cell. Endoplasmic reticulum chaperone that plays a key role in protein folding and quality control in the endoplasmic reticulum lumen. Involved in the correct folding of proteins and degradation of misfolded proteins via its interaction with DNAJC10/ERdj5, probably to facilitate the release of DNAJC10/ERdj5 from its substrate. Acts as a key repressor of the EIF2AK3/PERK and ERN1/IRE1-mediated unfolded protein response (UPR). In the unstressed endoplasmic reticulum, recruited by DNAJB9/ERdj4 to the luminal region of ERN1/IRE1, leading to disrupt the dimerization of ERN1/IRE1, thereby inactivating ERN1/IRE1. Also binds and inactivates EIF2AK3/PERK in unstressed cells. Accumulation of misfolded protein in the endoplasmic reticulum causes release of HSPA5/BiP from ERN1/IRE1 and EIF2AK3/PERK, allowing their homodimerization and subsequent activation. Plays an auxiliary role in post-translational transport of small presecretory proteins across endoplasmic reticulum (ER). May function as an allosteric modulator for SEC61 channel-forming translocon complex, likely cooperating with SEC62 to enable the productive insertion of these precursors into SEC61 channel. Appears to specifically regulate translocation of precursors having inhibitory residues in their mature region that weaken channel gating. May also play a role in apoptosis and cell proliferation. The sequence is that of Endoplasmic reticulum chaperone BiP from Rattus norvegicus (Rat).